Consider the following 348-residue polypeptide: D-alanine--D-alanine ligase (348 aa).

The ATP-grasp domain maps to 132–334 (KRVLESAGIP…YSDLIEELVS (203 aa)). 162–217 (LETLSFPIFVKPANMGSSVGISKAESIEGLREAIALALKYDSRILIEQGVVAREIE) contacts ATP. Mg(2+) contacts are provided by Asp-288, Glu-301, and Asn-303.

It belongs to the D-alanine--D-alanine ligase family. Requires Mg(2+) as cofactor. Mn(2+) is required as a cofactor.

It is found in the cytoplasm. It catalyses the reaction 2 D-alanine + ATP = D-alanyl-D-alanine + ADP + phosphate + H(+). Its pathway is cell wall biogenesis; peptidoglycan biosynthesis. Its function is as follows. Cell wall formation. The polypeptide is D-alanine--D-alanine ligase (Streptococcus uberis (strain ATCC BAA-854 / 0140J)).